Consider the following 310-residue polypeptide: HMG box-containing protein C28F2.11 (310 aa).

Low complexity predominate over residues 69–95 (ESPSKKATSPKKATPAAVAPVEATSAV). Residues 69–310 (ESPSKKATSP…TTPPTAKVAN (242 aa)) form a disordered region. Serine 70 carries the post-translational modification Phosphoserine. At threonine 105 the chain carries Phosphothreonine. Residues 117-187 (PKRPPSAYNL…AYEEEMAAYN (71 aa)) constitute a DNA-binding region (HMG box). Composition is skewed to basic and acidic residues over residues 131–178 (QRSE…LREA) and 200–226 (VTAEETSTKPSEDLSSPTKKDLIDFSE). 3 positions are modified to phosphoserine: serine 161, serine 214, and serine 215. Residues threonine 217 and threonine 237 each carry the phosphothreonine modification. The segment covering 255 to 268 (STVPTSNVEPVSQP) has biased composition (polar residues). Phosphoserine is present on residues serine 271, serine 278, serine 294, serine 295, and serine 297. A phosphothreonine mark is found at threonine 302 and threonine 305.

The protein localises to the cytoplasm. This Schizosaccharomyces pombe (strain 972 / ATCC 24843) (Fission yeast) protein is HMG box-containing protein C28F2.11.